The following is a 118-amino-acid chain: Large ribosomal subunit protein bL17 (118 aa).

It belongs to the bacterial ribosomal protein bL17 family. As to quaternary structure, part of the 50S ribosomal subunit. Contacts protein L32.

The polypeptide is Large ribosomal subunit protein bL17 (Campylobacter hominis (strain ATCC BAA-381 / DSM 21671 / CCUG 45161 / LMG 19568 / NCTC 13146 / CH001A)).